Here is a 374-residue protein sequence, read N- to C-terminus: Flagellar P-ring protein (374 aa).

The signal sequence occupies residues 1 to 29 (MSGLGFTGVVRIAVMALLALAFLGAPAHA). Over residues 296-311 (ESPQVSQPNPLSNGRT) the composition is skewed to polar residues. Positions 296–316 (ESPQVSQPNPLSNGRTVMTPR) are disordered.

The protein belongs to the FlgI family. The basal body constitutes a major portion of the flagellar organelle and consists of four rings (L,P,S, and M) mounted on a central rod.

It is found in the periplasm. Its subcellular location is the bacterial flagellum basal body. In terms of biological role, assembles around the rod to form the L-ring and probably protects the motor/basal body from shearing forces during rotation. This Nitrobacter winogradskyi (strain ATCC 25391 / DSM 10237 / CIP 104748 / NCIMB 11846 / Nb-255) protein is Flagellar P-ring protein.